A 501-amino-acid chain; its full sequence is Ribose import ATP-binding protein RbsA (501 aa).

ABC transporter domains are found at residues 5-241 (LSLE…VGRK) and 252-498 (LRND…TGGV). 37-44 (GENGAGKS) contacts ATP.

It belongs to the ABC transporter superfamily. Ribose importer (TC 3.A.1.2.1) family. In terms of assembly, the complex is composed of an ATP-binding protein (RbsA), two transmembrane proteins (RbsC) and a solute-binding protein (RbsB).

The protein localises to the cell inner membrane. The enzyme catalyses D-ribose(out) + ATP + H2O = D-ribose(in) + ADP + phosphate + H(+). Part of the ABC transporter complex RbsABC involved in ribose import. Responsible for energy coupling to the transport system. This chain is Ribose import ATP-binding protein RbsA, found in Hahella chejuensis (strain KCTC 2396).